Consider the following 1405-residue polypeptide: DNA-directed RNA polymerase subunit beta' (1405 aa).

Zn(2+)-binding residues include cysteine 70, cysteine 72, cysteine 85, and cysteine 88. Aspartate 460, aspartate 462, and aspartate 464 together coordinate Mg(2+). Zn(2+) is bound by residues cysteine 814, cysteine 888, cysteine 895, and cysteine 898.

It belongs to the RNA polymerase beta' chain family. The RNAP catalytic core consists of 2 alpha, 1 beta, 1 beta' and 1 omega subunit. When a sigma factor is associated with the core the holoenzyme is formed, which can initiate transcription. Requires Mg(2+) as cofactor. Zn(2+) serves as cofactor.

The catalysed reaction is RNA(n) + a ribonucleoside 5'-triphosphate = RNA(n+1) + diphosphate. Functionally, DNA-dependent RNA polymerase catalyzes the transcription of DNA into RNA using the four ribonucleoside triphosphates as substrates. This Shewanella woodyi (strain ATCC 51908 / MS32) protein is DNA-directed RNA polymerase subunit beta'.